Here is a 220-residue protein sequence, read N- to C-terminus: Cytidylate kinase (220 aa).

10-18 is an ATP binding site; it reads GPASSGKST.

This sequence belongs to the cytidylate kinase family. Type 1 subfamily.

It is found in the cytoplasm. The enzyme catalyses CMP + ATP = CDP + ADP. The catalysed reaction is dCMP + ATP = dCDP + ADP. The sequence is that of Cytidylate kinase from Lactococcus lactis subsp. cremoris (strain SK11).